The primary structure comprises 466 residues: Ribulose bisphosphate carboxylase large chain (466 aa).

Lysine 5 carries the N6,N6,N6-trimethyllysine modification. Positions 114 and 164 each coordinate substrate. The active-site Proton acceptor is the lysine 166. Lysine 168 lines the substrate pocket. Positions 192, 194, and 195 each coordinate Mg(2+). At lysine 192 the chain carries N6-carboxylysine. Catalysis depends on histidine 285, which acts as the Proton acceptor. Arginine 286, histidine 318, and serine 370 together coordinate substrate.

Belongs to the RuBisCO large chain family. Type I subfamily. As to quaternary structure, heterohexadecamer of 8 large chains and 8 small chains; disulfide-linked. The disulfide link is formed within the large subunit homodimers. It depends on Mg(2+) as a cofactor. In terms of processing, the disulfide bond which can form in the large chain dimeric partners within the hexadecamer appears to be associated with oxidative stress and protein turnover.

It is found in the plastid. It localises to the chloroplast. The catalysed reaction is 2 (2R)-3-phosphoglycerate + 2 H(+) = D-ribulose 1,5-bisphosphate + CO2 + H2O. It carries out the reaction D-ribulose 1,5-bisphosphate + O2 = 2-phosphoglycolate + (2R)-3-phosphoglycerate + 2 H(+). In terms of biological role, ruBisCO catalyzes two reactions: the carboxylation of D-ribulose 1,5-bisphosphate, the primary event in carbon dioxide fixation, as well as the oxidative fragmentation of the pentose substrate in the photorespiration process. Both reactions occur simultaneously and in competition at the same active site. In Silene gallica (Common catchfly), this protein is Ribulose bisphosphate carboxylase large chain.